Here is a 469-residue protein sequence, read N- to C-terminus: MSEDLSMKCGLEIHVQVDTNSKLFCQCPTNYKDVEPNTNICPVCIGHPGAKPMPPNKKAIDMAIMVAKMLGCEMVIDKDIYFQRKHYNYPDLPSGYQKTSVPIGEHGKFLGVGITEVHLEEDPGQYKPDLGTVDYNRSGTPLIEIVTDPDMKSPEEAREFLRQLLRLFRYIGNLRGEGTMRADTNISIKYNGIQGNRVEVKNVNSIRGVYKVLKYELIRQKNVLRRGGEIKLETRAFMESQMITKGMRSKETADDYRYIPDPDLQPIVLSNEWVEKVEAQMPETPMNKEKRFVEQYGIKEDDAKVLVSDLELADVFEKVVAELGNDKDGISLAVTWIRNELKRVLVYNKLEFFETNLKPEHMVELINSIKDKTISQKIGKTIIEQMVEYKGEKTPKELINEMGLTVIEDTSELEKACEEAIKNSDKAIEDYKSGNQRALNSVVGQVMKLTRGRAEPATVVEILKKKIDG.

The protein belongs to the GatB/GatE family. GatB subfamily. In terms of assembly, heterotrimer of A, B and C subunits.

The catalysed reaction is L-glutamyl-tRNA(Gln) + L-glutamine + ATP + H2O = L-glutaminyl-tRNA(Gln) + L-glutamate + ADP + phosphate + H(+). The enzyme catalyses L-aspartyl-tRNA(Asn) + L-glutamine + ATP + H2O = L-asparaginyl-tRNA(Asn) + L-glutamate + ADP + phosphate + 2 H(+). In terms of biological role, allows the formation of correctly charged Asn-tRNA(Asn) or Gln-tRNA(Gln) through the transamidation of misacylated Asp-tRNA(Asn) or Glu-tRNA(Gln) in organisms which lack either or both of asparaginyl-tRNA or glutaminyl-tRNA synthetases. The reaction takes place in the presence of glutamine and ATP through an activated phospho-Asp-tRNA(Asn) or phospho-Glu-tRNA(Gln). In Methanococcus maripaludis (strain C6 / ATCC BAA-1332), this protein is Aspartyl/glutamyl-tRNA(Asn/Gln) amidotransferase subunit B.